Reading from the N-terminus, the 93-residue chain is UPF0358 protein BLi01701/BL02974 (93 aa).

It belongs to the UPF0358 family.

The sequence is that of UPF0358 protein BLi01701/BL02974 from Bacillus licheniformis (strain ATCC 14580 / DSM 13 / JCM 2505 / CCUG 7422 / NBRC 12200 / NCIMB 9375 / NCTC 10341 / NRRL NRS-1264 / Gibson 46).